A 415-amino-acid polypeptide reads, in one-letter code: Esterase FrsA (415 aa).

The segment at 1–23 (MANRNLSESLFKPRQKHQETSTL) is disordered.

It belongs to the FrsA family.

It carries out the reaction a carboxylic ester + H2O = an alcohol + a carboxylate + H(+). In terms of biological role, catalyzes the hydrolysis of esters. This is Esterase FrsA from Photorhabdus laumondii subsp. laumondii (strain DSM 15139 / CIP 105565 / TT01) (Photorhabdus luminescens subsp. laumondii).